Reading from the N-terminus, the 175-residue chain is Protein MAL2 (175 aa).

Over 1-33 (MSAGGAVPPPPNPAVSFPAPRVTLPAGPDILRT) the chain is Cytoplasmic. The MARVEL domain occupies 30–174 (ILRTYSGAFV…SLGLALRRWR (145 aa)). Residues 34–54 (YSGAFVCLEIVLGGLVWILVA) form a helical membrane-spanning segment. Topologically, residues 55–65 (SSNVPLPLLQG) are lumenal. A helical transmembrane segment spans residues 66–86 (WVMFVSVTAFFFSLLFLGLFL). Over 87–101 (SGMVTQIDANWNFLD) the chain is Cytoplasmic. A helical membrane pass occupies residues 102 to 122 (FVYHFIVFVFYFGAFLLEAAA). Residues 123 to 148 (TSLHDLQCNTTMTVKPLLNDNQYNIN) lie on the Lumenal side of the membrane. Residue asparagine 131 is glycosylated (N-linked (GlcNAc...) asparagine). Residues 149–169 (VAATVFAFMTTACYGCSLGLA) traverse the membrane as a helical segment. The Cytoplasmic segment spans residues 170-175 (LRRWRP).

Belongs to the MAL family. Interacts with TPD52L2.

It is found in the cell membrane. The protein resides in the apical cell membrane. Its function is as follows. Member of the machinery of polarized transport. Required for the indirect transcytotic route at the step of the egress of the transcytosing cargo from perinuclear endosomes in order for it to travel to the apical surface via a raft-dependent pathway. The protein is Protein MAL2 (Mal2) of Mus musculus (Mouse).